A 391-amino-acid polypeptide reads, in one-letter code: Ferrochelatase (391 aa).

Residues His-196 and Glu-281 each coordinate Fe cation.

The protein belongs to the ferrochelatase family.

Its subcellular location is the cytoplasm. It catalyses the reaction heme b + 2 H(+) = protoporphyrin IX + Fe(2+). Its pathway is porphyrin-containing compound metabolism; protoheme biosynthesis; protoheme from protoporphyrin-IX: step 1/1. In terms of biological role, catalyzes the ferrous insertion into protoporphyrin IX. The polypeptide is Ferrochelatase (Prochlorococcus marinus (strain MIT 9515)).